We begin with the raw amino-acid sequence, 107 residues long: Regulatory protein SoxS (107 aa).

Residues 8-106 (QTLIEWIDEH…DRTPSDYRHR (99 aa)) enclose the HTH araC/xylS-type domain. 2 consecutive DNA-binding regions (H-T-H motif) follow at residues 25 to 46 (DVVA…RTVT) and 73 to 96 (IFDI…RREF).

It is found in the cytoplasm. Transcriptional activator of the superoxide response regulon of E.coli that includes at least 10 genes such as sodA, nfo, zwf and micF. Binds the DNA sequence 5'-GCACN(7)CAA-3'. It also facilitates the subsequent binding of RNA polymerase to the micF and the nfo promoters. This chain is Regulatory protein SoxS (soxS), found in Salmonella typhimurium (strain LT2 / SGSC1412 / ATCC 700720).